The primary structure comprises 660 residues: Leucine-rich repeat transmembrane protein FLRT2 (660 aa).

The N-terminal stretch at Met-1–Ala-35 is a signal peptide. 2 disulfides stabilise this stretch: Cys-36–Cys-42 and Cys-40–Cys-49. Positions Cys-36 to Val-67 constitute an LRRNT domain. Residues Cys-36 to Pro-540 lie on the Extracellular side of the membrane. LRR repeat units follow at residues Pro-62–Val-87, Gln-88–Pro-108, Lys-109–Gln-131, Leu-132–Glu-157, Ile-159–Asp-181, Gln-183–Asn-202, Leu-203–His-228, Leu-229–Gly-251, Thr-252–Asn-274, and Leu-275–His-298. Asn-202 carries an N-linked (GlcNAc...) asparagine glycan. Disulfide bonds link Cys-314/Cys-339 and Cys-316/Cys-360. The region spanning Met-338–Pro-361 is the LRRCT domain. Residues Pro-372 to Val-396 show a composition bias toward low complexity. The interval Pro-372–Gly-413 is disordered. Residues Pro-419 to Ser-517 form the Fibronectin type-III domain. The chain crosses the membrane as a helical span at residues Phe-541–Val-561. At Phe-562–Thr-660 the chain is on the cytoplasmic side.

In terms of assembly, self-associates (via leucine-rich repeats), giving rise to homooligomers. Interacts with FGFR1. Interacts with FGFR2. Interacts (via extracellular domain) with ADGRL1/LPHN1. Interacts (via extracellular domain) with ADGRL3 (via olfactomedin-like domain). Interacts (via extracellular domain) with UNC5D (via the first Ig-like domain). Can also interact (via extracellular domain) with UNC5B, but with much lower affinity. Interacts (via extracellular domain) with FN1. N-glycosylated. In terms of processing, proteolytic cleavage in the juxtamembrane region gives rise to a soluble ectodomain. Cleavage is probably effected by a metalloprotease. In terms of tissue distribution, detected in brain (at protein level).

It is found in the cell membrane. Its subcellular location is the endoplasmic reticulum membrane. The protein localises to the synapse. The protein resides in the synaptosome. It localises to the cell junction. It is found in the focal adhesion. Its subcellular location is the secreted. The protein localises to the extracellular space. The protein resides in the extracellular matrix. It localises to the microsome membrane. Functions in cell-cell adhesion, cell migration and axon guidance. Mediates cell-cell adhesion via its interactions with ADGRL3 and probably also other latrophilins that are expressed at the surface of adjacent cells. May play a role in the migration of cortical neurons during brain development via its interaction with UNC5D. Mediates axon growth cone collapse and plays a repulsive role in neuron guidance via its interaction with UNC5D, and possibly also other UNC-5 family members. Plays a role in fibroblast growth factor-mediated signaling cascades. Required for normal organization of the cardiac basement membrane during embryogenesis, and for normal embryonic epicardium and heart morphogenesis. The sequence is that of Leucine-rich repeat transmembrane protein FLRT2 from Rattus norvegicus (Rat).